Reading from the N-terminus, the 836-residue chain is Glutamate receptor ionotropic, kainate 1 (836 aa).

An N-terminal signal peptide occupies residues 1 to 30 (MERGTVLIQPGLWTRDTSWTLLYFLCYILP). Over 31–561 (QTSPQVLRIG…VFSFLNPLSP (531 aa)) the chain is Extracellular. Residues Asn-68, Asn-74, Asn-276, Asn-379, Asn-413, Asn-424, and Asn-431 are each glycosylated (N-linked (GlcNAc...) asparagine). Residues Pro-516, Thr-518, and Arg-523 each coordinate L-glutamate. N-linked (GlcNAc...) asparagine glycosylation occurs at Asn-546. Residues 562-582 (DIWMYVLLACLGVSCVLFVIA) traverse the membrane as a helical segment. Topologically, residues 583–638 (RFTPYEWYNPHPCNPDSDVVENNFTLLNSFWFGVGALMQQGSELMPKALSTRIVGG) are cytoplasmic. The helical transmembrane segment at 639–659 (IWWFFTLIIISSYTANLAAFL) threads the bilayer. Over 660-721 (TVERMESPID…RQPSALGVEN (62 aa)) the chain is Extracellular. Ser-689 and Thr-690 together coordinate L-glutamate. Residues 722-742 (IGGIFIVLAAGLVLSVFVAIG) traverse the membrane as a helical segment. The Cytoplasmic segment spans residues 743 to 836 (EFIYKSRKNN…RRTQRKETVA (94 aa)).

This sequence belongs to the glutamate-gated ion channel (TC 1.A.10.1) family. GRIK1 subfamily. In terms of assembly, homotetramer or heterotetramer of pore-forming glutamate receptor subunits. Tetramers may be formed by the dimerization of dimers. Can form functional heteromeric receptors with GRIK4 and GRIK5. Interacts with KLHL17. In terms of tissue distribution, most abundant in the cerebellum. Also present in the suprachiasmatic nuclei of the hypothalamus.

The protein localises to the cell membrane. The protein resides in the postsynaptic cell membrane. The enzyme catalyses Ca(2+)(in) = Ca(2+)(out). Ionotropic glutamate receptor that functions as a cation-permeable ligand-gated ion channel, gated by L-glutamate and the glutamatergic agonist kainic acid. L-glutamate acts as an excitatory neurotransmitter at many synapses in the central nervous system. Binding of the excitatory neurotransmitter L-glutamate induces a conformation change, leading to the opening of the cation channel, and thereby converts the chemical signal to an electrical impulse. The receptor then desensitizes rapidly and enters a transient inactive state, characterized by the presence of bound agonist. This chain is Glutamate receptor ionotropic, kainate 1 (Grik1), found in Mus musculus (Mouse).